A 93-amino-acid chain; its full sequence is C-C motif chemokine 17 (93 aa).

An N-terminal signal peptide occupies residues 1–23; the sequence is MMSLQMLLLAALLLGTSLQHASA. 2 disulfides stabilise this stretch: Cys33-Cys57 and Cys34-Cys73.

This sequence belongs to the intercrine beta (chemokine CC) family.

The protein localises to the secreted. Functionally, chemokine, which displays chemotactic activity for T lymphocytes, preferentially Th2 cells, but not monocytes or granulocytes. Therefore plays an important role in a wide range of inflammatory and immunological processes. Acts by binding to CCR4 at T-cell surface. Mediates GM-CSF/CSF2-driven pain and inflammation. In the brain, required to maintain the typical, highly branched morphology of hippocampal microglia under homeostatic conditions. May be important for the appropriate adaptation of microglial morphology and synaptic plasticity to acute lipopolysaccharide (LPS)-induced neuroinflammation. Plays a role in wound healing, mainly by inducing fibroblast migration into the wound. The protein is C-C motif chemokine 17 (Ccl17) of Rattus norvegicus (Rat).